The sequence spans 30 residues: Ampulexin 3 (30 aa).

The N-terminal stretch at 1–17 (MKAIMVLFYVMTLTIIG) is a signal peptide.

As to quaternary structure, monomer. Expressed in venom sac and, to a lesser extent, in venom gland. Not expressed in brain.

The protein resides in the secreted. This is Ampulexin 3 from Ampulex compressa (Emerald cockroach wasp).